A 143-amino-acid polypeptide reads, in one-letter code: Putative transmembrane protein ORF32 (143 aa).

The next 2 helical transmembrane spans lie at Gly20 to Leu42 and Trp52 to Val74.

The protein resides in the host membrane. The protein is Putative transmembrane protein ORF32 of Haloarcula hispanica (His1V).